Consider the following 196-residue polypeptide: Putative NADH dehydrogenase/NAD(P)H nitroreductase Smal_0358 (196 aa).

It belongs to the nitroreductase family. HadB/RutE subfamily. It depends on FMN as a cofactor.

The protein is Putative NADH dehydrogenase/NAD(P)H nitroreductase Smal_0358 of Stenotrophomonas maltophilia (strain R551-3).